We begin with the raw amino-acid sequence, 470 residues long: Zinc finger protein weckle (470 aa).

The segment at 1 to 103 is required for homodimerization; the sequence is MGVPTSDWIY…DALRLEYGLP (103 aa). The 73-residue stretch at 10–82 folds into the ZAD domain; sequence YWCRLCARDD…SKVQAIFELL (73 aa). Cys-12, Cys-15, Cys-55, and Cys-58 together coordinate Zn(2+). Residues 156-265 form a disordered region; sequence NSDPKVLASP…LSMSPHGSQS (110 aa). Position 168 is a phosphoserine (Ser-168). The span at 195–208 shows a compositional bias: acidic residues; it reads ESDDEEAILDEDEA. The span at 214-225 shows a compositional bias: basic residues; it reads LKRKRGRPKGSG. Residues 237-254 are compositionally biased toward basic and acidic residues; it reads TSREPDDNAKSKQDDKTS. A compositionally biased stretch (polar residues) spans 255–265; the sequence is ELSMSPHGSQS. 6 consecutive C2H2-type zinc fingers follow at residues 271–294, 300–322, 328–350, 355–377, 383–405, and 411–434; these read YPCK…HDMH, YVCD…QLVH, CICP…SQTH, FECN…KYVH, FKCE…LLGH, and YVCK…WKKH.

In terms of assembly, homodimer. Interacts with Myd88 and Toll.

The protein resides in the cell membrane. In terms of biological role, acts as an adapter to assemble/stabilize a Toll/wek/Myd88/tube complex; required for efficient recruitment of Myd88 to Toll. Dispensable for innate immune response; plays a minimal role, if any, in the immune defense against Gram-positive bacteria and fungi. Involved in dorsoventral axis determination. The polypeptide is Zinc finger protein weckle (Drosophila melanogaster (Fruit fly)).